The following is a 490-amino-acid chain: ATP synthase subunit beta, chloroplastic (490 aa).

170–177 (GGAGVGKT) provides a ligand contact to ATP.

The protein belongs to the ATPase alpha/beta chains family. As to quaternary structure, F-type ATPases have 2 components, CF(1) - the catalytic core - and CF(0) - the membrane proton channel. CF(1) has five subunits: alpha(3), beta(3), gamma(1), delta(1), epsilon(1). CF(0) has four main subunits: a(1), b(1), b'(1) and c(9-12).

Its subcellular location is the plastid. The protein resides in the chloroplast thylakoid membrane. The enzyme catalyses ATP + H2O + 4 H(+)(in) = ADP + phosphate + 5 H(+)(out). In terms of biological role, produces ATP from ADP in the presence of a proton gradient across the membrane. The catalytic sites are hosted primarily by the beta subunits. This Convolvulus arvensis (Field bindweed) protein is ATP synthase subunit beta, chloroplastic.